Reading from the N-terminus, the 118-residue chain is Small ribosomal subunit protein uS13 (118 aa).

Positions 92–118 (RRSLPVRGQRTKTNARTRKGPRKPIKK) are disordered.

Belongs to the universal ribosomal protein uS13 family. In terms of assembly, part of the 30S ribosomal subunit. Forms a loose heterodimer with protein S19. Forms two bridges to the 50S subunit in the 70S ribosome.

Located at the top of the head of the 30S subunit, it contacts several helices of the 16S rRNA. In the 70S ribosome it contacts the 23S rRNA (bridge B1a) and protein L5 of the 50S subunit (bridge B1b), connecting the 2 subunits; these bridges are implicated in subunit movement. Contacts the tRNAs in the A and P-sites. The polypeptide is Small ribosomal subunit protein uS13 (Acinetobacter baylyi (strain ATCC 33305 / BD413 / ADP1)).